A 64-amino-acid chain; its full sequence is Large ribosomal subunit protein uL29 (64 aa).

Belongs to the universal ribosomal protein uL29 family.

The chain is Large ribosomal subunit protein uL29 from Verminephrobacter eiseniae (strain EF01-2).